A 106-amino-acid polypeptide reads, in one-letter code: NADH dehydrogenase [ubiquinone] iron-sulfur protein 5 (106 aa).

The CHCH domain occupies 30 to 74 (PSRCHAFEKEWIECAHGIGSIRAEKECKIEFEDFRECLLRQKTMK). 2 consecutive short sequence motifs (cx9C motif) follow at residues 33–43 (CHAFEKEWIEC) and 56–66 (CKIEFEDFREC). 2 disulfides stabilise this stretch: Cys33–Cys66 and Cys43–Cys56. The interval 84–106 (EKLIKEGKYTPPPHHSGQEEPRS) is disordered.

This sequence belongs to the complex I NDUFS5 subunit family. As to quaternary structure, mammalian complex I is composed of 45 different subunits. This is a component of the iron-sulfur (IP) fragment of the enzyme.

The protein localises to the mitochondrion inner membrane. It localises to the mitochondrion intermembrane space. In terms of biological role, accessory subunit of the mitochondrial membrane respiratory chain NADH dehydrogenase (Complex I), that is believed not to be involved in catalysis. Complex I functions in the transfer of electrons from NADH to the respiratory chain. The immediate electron acceptor for the enzyme is believed to be ubiquinone. This Bos taurus (Bovine) protein is NADH dehydrogenase [ubiquinone] iron-sulfur protein 5 (NDUFS5).